The primary structure comprises 124 residues: uncharacterized protein (124 aa).

The dksA C4-type; degenerate zinc finger occupies 73 to 94 (CEETGAPIPLAKLAVLPTARTA).

This is an uncharacterized protein from Bacillus subtilis (strain 168).